A 199-amino-acid chain; its full sequence is Recombination protein RecR (199 aa).

The C4-type zinc finger occupies 56–71 (CSICFNVSQDDQCRIC). The region spanning 79 to 174 (SVLCVVEEYK…RVTRLASGLP (96 aa)) is the Toprim domain.

This sequence belongs to the RecR family.

In terms of biological role, may play a role in DNA repair. It seems to be involved in an RecBC-independent recombinational process of DNA repair. It may act with RecF and RecO. The chain is Recombination protein RecR from Nocardioides sp. (strain ATCC BAA-499 / JS614).